Here is a 136-residue protein sequence, read N- to C-terminus: Histone H3.2 (136 aa).

The tract at residues 1 to 43 (MARTKQTARKSTGGKAPRKQLATKAARKSAPATGGVKKPHRFR) is disordered. At Lys5 the chain carries N6-methylated lysine. Lys10 is subject to N6-acetyllysine; alternate. The residue at position 10 (Lys10) is an N6-methylated lysine; alternate. A Phosphoserine modification is found at Ser11. Thr12 is subject to Phosphothreonine. Residue Lys15 is modified to N6-acetyllysine. Residues Lys19 and Lys24 each carry the N6-acetyllysine; alternate modification. N6-methylated lysine; alternate is present on residues Lys19 and Lys24. Lys28 is subject to N6-methylated lysine. Ser29 carries the post-translational modification Phosphoserine. Lys37 carries the post-translational modification N6-methylated lysine.

This sequence belongs to the histone H3 family. In terms of assembly, the nucleosome is a histone octamer containing two molecules each of H2A, H2B, H3 and H4 assembled in one H3-H4 heterotetramer and two H2A-H2B heterodimers. The octamer wraps approximately 147 bp of DNA. Acetylation is generally linked to gene activation. Can be acetylated to form H3K9ac, H3K14ac, H3K18ac and H3K23ac. H3K9ac could compete with H3K9me and prevent gene silencing. H3K9ac is restricted to euchromatin. Post-translationally, methylated to form mainly H3K4me, H3K9me, H3K18me, H3K23me, H3K27me and H3K36me. H3K4me1/2/3, H3K9me3, H3K27me3 and H3K36me1/2/3 are typical marks for euchromatin, whereas heterochromatic chromocenters are enriched in H3K9me1/2 and H3K27me1/2. H2BK143ub1 is probably prerequisite for H3K4me. In terms of processing, can be phosphorylated to form H3S10ph, H3T11ph and H3S28ph. In terms of tissue distribution, expressed in bicellular pollen, root tips, shoot apices, young leaves and ovules.

Its subcellular location is the nucleus. The protein localises to the nucleolus. The protein resides in the chromosome. Its function is as follows. Core component of nucleosome. Nucleosomes wrap and compact DNA into chromatin, limiting DNA accessibility to the cellular machineries which require DNA as a template. Histones thereby play a central role in transcription regulation, DNA repair, DNA replication and chromosomal stability. DNA accessibility is regulated via a complex set of post-translational modifications of histones, also called histone code, and nucleosome remodeling. The protein is Histone H3.2 (YAH3) of Lilium longiflorum (Trumpet lily).